We begin with the raw amino-acid sequence, 428 residues long: Sialidase-3 (428 aa).

An FRIP motif motif is present at residues Tyr24–Pro27. Substrate-binding residues include Arg25 and Arg45. The active-site Proton acceptor is the Asp50. A BNR 1 repeat occupies Ile129 to Glu140. Substrate is bound by residues Tyr179 and Tyr181. Residues Ile203–His214 form a BNR 2 repeat. The substrate site is built by Glu225 and Arg245. A BNR 3 repeat occupies Ala254–Arg265. Positions Arg294–Glu318 are disordered. Polar residues predominate over residues Lys301 to Ser313. Ser313 is modified (phosphoserine). A substrate-binding site is contributed by Arg340. The active-site Nucleophile is the Tyr370. Residue Glu387 is part of the active site.

It belongs to the glycosyl hydrolase 33 family. In terms of assembly, interacts with CAV1; this interaction enhances NEU3 sialidase activity within caveola. Interacts with EGFR; this interaction mediates desialylation of EGFR and enhances downstream signaling. Post-translationally, palmitoylated; may regulate intracellular trafficking and anchorage to plasma membrane and endomembranes. As to expression, highly expressed in skeletal muscle, testis, adrenal gland and thymus, followed by pancreas, liver, heart and thymus. Weakly expressed in kidney, placenta, brain and lung.

The protein localises to the cell membrane. Its subcellular location is the membrane. It is found in the caveola. The protein resides in the early endosome membrane. It localises to the recycling endosome membrane. The protein localises to the lysosome membrane. The enzyme catalyses Hydrolysis of alpha-(2-&gt;3)-, alpha-(2-&gt;6)-, alpha-(2-&gt;8)- glycosidic linkages of terminal sialic acid residues in oligosaccharides, glycoproteins, glycolipids, colominic acid and synthetic substrates.. It catalyses the reaction a ganglioside GD1a + H2O = a ganglioside GM1 + N-acetylneuraminate. The catalysed reaction is a ganglioside GD1a (d18:1(4E)) + H2O = a ganglioside GM1 (d18:1(4E)) + N-acetylneuraminate. It carries out the reaction a ganglioside GD1b + H2O = a ganglioside GM1 + N-acetylneuraminate. The enzyme catalyses a ganglioside GD1b (d18:1(4E)) + H2O = a ganglioside GM1 (d18:1(4E)) + N-acetylneuraminate. It catalyses the reaction a ganglioside GD3 + H2O = a ganglioside GM3 + N-acetylneuraminate. The catalysed reaction is a ganglioside GD3 (d18:1(4E)) + H2O = a ganglioside GM3 (d18:1(4E)) + N-acetylneuraminate. It carries out the reaction a ganglioside GM3 + H2O = a beta-D-galactosyl-(1-&gt;4)-beta-D-glucosyl-(1&lt;-&gt;1)-ceramide + N-acetylneuraminate. The enzyme catalyses a ganglioside GM1 + H2O = a ganglioside GA1 + N-acetylneuraminate. It catalyses the reaction a ganglioside GM1 (d18:1(4E)) + H2O = a ganglioside GA1 (d18:1(4E)) + N-acetylneuraminate. The catalysed reaction is a ganglioside GM2 (d18:1(4E)) + H2O = a ganglioside GA2 (d18:1(4E)) + N-acetylneuraminate. It carries out the reaction a ganglioside GM3 (d18:1(4E)) + H2O = a beta-D-Gal-(1-&gt;4)-beta-D-Glc-(1&lt;-&gt;1)-Cer(d18:1(4E)) + N-acetylneuraminate. The enzyme catalyses a ganglioside GT1b + H2O = a ganglioside GD1b + N-acetylneuraminate. Exo-alpha-sialidase that catalyzes the hydrolytic cleavage of the terminal sialic acid (N-acetylneuraminic acid, Neu5Ac) of a glycan moiety in the catabolism of glycolipids, glycoproteins and oligosacharides. Displays high catalytic efficiency for gangliosides including alpha-(2-&gt;3)-sialylated GD1a and GM3 and alpha-(2-&gt;8)-sialylated GD3. Plays a role in the regulation of transmembrane signaling through the modulation of ganglioside content of the lipid bilayer and by direct interaction with signaling receptors, such as EGFR. Desialylates EGFR and activates downstream signaling in proliferating cells. Contributes to clathrin-mediated endocytosis by regulating sorting of endocytosed receptors to early and recycling endosomes. The chain is Sialidase-3 (NEU3) from Homo sapiens (Human).